The following is a 258-amino-acid chain: Deoxyribose-phosphate aldolase (258 aa).

The active-site Proton donor/acceptor is the aspartate 101. The active-site Schiff-base intermediate with acetaldehyde is lysine 166. The active-site Proton donor/acceptor is lysine 200.

It belongs to the DeoC/FbaB aldolase family. DeoC type 2 subfamily.

It is found in the cytoplasm. The enzyme catalyses 2-deoxy-D-ribose 5-phosphate = D-glyceraldehyde 3-phosphate + acetaldehyde. It functions in the pathway carbohydrate degradation; 2-deoxy-D-ribose 1-phosphate degradation; D-glyceraldehyde 3-phosphate and acetaldehyde from 2-deoxy-alpha-D-ribose 1-phosphate: step 2/2. Catalyzes a reversible aldol reaction between acetaldehyde and D-glyceraldehyde 3-phosphate to generate 2-deoxy-D-ribose 5-phosphate. The sequence is that of Deoxyribose-phosphate aldolase from Actinobacillus pleuropneumoniae serotype 3 (strain JL03).